The chain runs to 640 residues: 1-deoxy-D-xylulose-5-phosphate synthase (640 aa).

Thiamine diphosphate contacts are provided by residues H79 and 120 to 122 (GHS). D151 is a binding site for Mg(2+). Thiamine diphosphate is bound by residues 152-153 (GA), N180, Y287, and E369. N180 serves as a coordination point for Mg(2+).

Belongs to the transketolase family. DXPS subfamily. Homodimer. Mg(2+) is required as a cofactor. Requires thiamine diphosphate as cofactor.

The catalysed reaction is D-glyceraldehyde 3-phosphate + pyruvate + H(+) = 1-deoxy-D-xylulose 5-phosphate + CO2. It functions in the pathway metabolic intermediate biosynthesis; 1-deoxy-D-xylulose 5-phosphate biosynthesis; 1-deoxy-D-xylulose 5-phosphate from D-glyceraldehyde 3-phosphate and pyruvate: step 1/1. In terms of biological role, catalyzes the acyloin condensation reaction between C atoms 2 and 3 of pyruvate and glyceraldehyde 3-phosphate to yield 1-deoxy-D-xylulose-5-phosphate (DXP). The protein is 1-deoxy-D-xylulose-5-phosphate synthase of Thioalkalivibrio sulfidiphilus (strain HL-EbGR7).